The sequence spans 365 residues: Phosphatidylcholine:ceramide cholinephosphotransferase 4 (365 aa).

Residues 1–44 (MISYPFFSLSPPGLVPPPMAVPPVEMYSGSFWNRMRKPLPLRTQ) lie on the Cytoplasmic side of the membrane. Residues 45-65 (VIRFTVVFVIVSFILAVALQI) form a helical membrane-spanning segment. The Lumenal segment spans residues 66–92 (THERMPDPKVTKPLPDLGFELLTKVPG). Residues 93–113 (MYVLADCCIGFLNILSVFTAF) form a helical membrane-spanning segment. The Cytoplasmic segment spans residues 114–165 (KLYLLHRHCVGSGEPELPCNIPGVSRFFLSVWLCKENCRIELRNVHTIAWIR). Residues 166 to 186 (FITSYALLLLFRSVVIVMTSL) form a helical membrane-spanning segment. Topologically, residues 187-229 (PAPDDLCQDPPKIENPVKNVILTVLTAGGGSIHCGDLMYSGHT) are lumenal. Residue histidine 228 is part of the active site. The helical transmembrane segment at 230–250 (VILTLHLMFHWIYGAMVHWSF) threads the bilayer. Arginine 251 is a topological domain (cytoplasmic). A helical transmembrane segment spans residues 252–272 (PVVTVVAIFGYYCIVASRFHY). Catalysis depends on residues histidine 271 and aspartate 275. At 273–275 (TDD) the chain is on the lumenal side. A helical membrane pass occupies residues 276–296 (VLVAIYLTIATFIAVGHNADG). The Cytoplasmic segment spans residues 297 to 365 (APWQLQLFIR…ALMFKCGAYV (69 aa)).

Belongs to the sphingomyelin synthase family.

Its subcellular location is the golgi apparatus membrane. It catalyses the reaction an N-acylsphing-4-enine + a 1,2-diacyl-sn-glycero-3-phosphocholine = a sphingomyelin + a 1,2-diacyl-sn-glycerol. In terms of biological role, bidirectional lipid cholinephosphotransferase capable of converting phosphatidylcholine (PC) and ceramide to sphingomyelin (SM) and diacylglycerol (DAG) and vice versa. Direction is dependent on the relative concentrations of DAG and ceramide as phosphocholine acceptors. Directly and specifically recognizes the choline head group on the substrate. Also requires two fatty chains on the choline-P donor molecule in order to be recognized efficiently as a substrate. Does not function strictly as a SM synthase. Essential for viability of the pathogenic bloodstream stage of this human protozoan parasite and, consequently, can be considered as potential drug target. This Trypanosoma brucei brucei (strain 927/4 GUTat10.1) protein is Phosphatidylcholine:ceramide cholinephosphotransferase 4.